Consider the following 367-residue polypeptide: MSISSKIRPTPRKPSRMATDHSFKMKKFYADPFAISSISLAIVSWVIAIGGSISSASTNESFPRFTWWGIVYQFLIICSLMLFYCFDLVDHYRIFITTSIAVAFVYNTNSATNLVYADGPKKAAASAGVILLSIINLIWILYYGGDNASPTNRWIDSFSIKGIRPSPLENSLHRARRRGNRNTTPYQNNVYNDAIRDSGYATQFDGYPQQQPSHTNYVSSTALAGFENTQPNTSEAVNLHLNTLQQRINSASNAKETNDNSNNQTNTNIGNTFDTDFSNGNTETTMGDTLGLYSDIGDDNFIYKAKALYPYDADDDDAYEISFEQNEILQVSDIEGRWWKARRANGETGIIPSNYVQLIDGPEEMHR.

Residues 1-32 (MSISSKIRPTPRKPSRMATDHSFKMKKFYADP) are Cytoplasmic-facing. A helical membrane pass occupies residues 33–53 (FAISSISLAIVSWVIAIGGSI). The Extracellular portion of the chain corresponds to 54–65 (SSASTNESFPRF). Asn-59 carries an N-linked (GlcNAc...) asparagine glycan. Residues 66–86 (TWWGIVYQFLIICSLMLFYCF) form a helical membrane-spanning segment. The Cytoplasmic portion of the chain corresponds to 87-93 (DLVDHYR). The chain crosses the membrane as a helical span at residues 94-114 (IFITTSIAVAFVYNTNSATNL). Topologically, residues 115–122 (VYADGPKK) are extracellular. The chain crosses the membrane as a helical span at residues 123–143 (AAASAGVILLSIINLIWILYY). The Cytoplasmic portion of the chain corresponds to 144–367 (GGDNASPTNR…LIDGPEEMHR (224 aa)). Ser-166 bears the Phosphoserine mark. The tract at residues 252–276 (SNAKETNDNSNNQTNTNIGNTFDTD) is disordered. Positions 259-272 (DNSNNQTNTNIGNT) are enriched in low complexity. In terms of domain architecture, SH3 spans 300–361 (NFIYKAKALY…PSNYVQLIDG (62 aa)).

The protein belongs to the SHO1 family. As to quaternary structure, forms homooligomers. Interacts (via the SH3 domain) with PBS2. Interacts with FUS1, STE11, STE50 and RNA polymerase II.

The protein localises to the cell membrane. It is found in the bud. It localises to the bud neck. The protein resides in the cell projection. Plasma membrane osmosensor that activates the high osmolarity glycerol (HOG) MAPK signaling pathway in response to high osmolarity. Detects changes in external osmolarity and activates PBS2 through the stimulation of STE11 and targets PBS2 to the plasma membrane. PBS2 activation leads to changes in glycerol production that helps to balance the intracellular and external osmotic pressures. Activates also HOG1 in response to heat stress and mediates resistance to oxidative stress. Involved in the regulation of the mating pathway. May be a receptor that feeds into the pseudohyphal growth pathway. This chain is High osmolarity signaling protein SHO1 (SHO1), found in Saccharomyces cerevisiae (strain ATCC 204508 / S288c) (Baker's yeast).